Here is a 280-residue protein sequence, read N- to C-terminus: Probable ketoamine kinase lp_1983 (280 aa).

Asp-87–Leu-89 provides a ligand contact to ATP. The active-site Proton acceptor is the Asp-189.

The protein belongs to the fructosamine kinase family.

It catalyses the reaction N(6)-(D-ribulosyl)-L-lysine + ATP = N(6)-(3-O-phospho-D-ribulosyl)-L-lysine + ADP + H(+). It carries out the reaction N-(D-ribulosyl)-cadaverine + ATP = N-(3-O-phospho-D-ribulosyl)-cadaverine + ADP + H(+). The enzyme catalyses N(6)-(D-erythrulosyl)-L-lysine + ATP = N(6)-(3-O-phospho-D-erythrulosyl)-L-lysine + ADP + H(+). The catalysed reaction is N-(D-erythrulosyl)-cadaverine + ATP = N-(3-O-phospho-D-erythrulosyl)-cadaverine + ADP + H(+). It catalyses the reaction N(6)-D-ribulosyl-L-lysyl-[protein] + ATP = N(6)-(3-O-phospho-D-ribulosyl)-L-lysyl-[protein] + ADP + H(+). It carries out the reaction N(6)-(D-erythrulosyl)-L-lysyl-[protein] + ATP = N(6)-(3-O-phospho-D-erythrulosyl)-L-lysyl-[protein] + ADP + H(+). Ketoamine kinase that phosphorylates ketoamines, such as erythruloselysine, erythrulosecadaverine, ribuloselysine and ribulosecadaverine, on the third carbon of the sugar moiety to generate ketoamine 3-phosphate. Has higher activity on free lysine (erythruloselysine and ribuloselysine), than on ribuloselysine and erythruloselysine residues on glycated proteins. The protein is Probable ketoamine kinase lp_1983 of Lactiplantibacillus plantarum (strain ATCC BAA-793 / NCIMB 8826 / WCFS1) (Lactobacillus plantarum).